Consider the following 354-residue polypeptide: Nicotinate-nucleotide--dimethylbenzimidazole phosphoribosyltransferase (354 aa).

Glutamate 322 acts as the Proton acceptor in catalysis.

Belongs to the CobT family.

It catalyses the reaction 5,6-dimethylbenzimidazole + nicotinate beta-D-ribonucleotide = alpha-ribazole 5'-phosphate + nicotinate + H(+). Its pathway is nucleoside biosynthesis; alpha-ribazole biosynthesis; alpha-ribazole from 5,6-dimethylbenzimidazole: step 1/2. In terms of biological role, catalyzes the synthesis of alpha-ribazole-5'-phosphate from nicotinate mononucleotide (NAMN) and 5,6-dimethylbenzimidazole (DMB). This Solidesulfovibrio magneticus (strain ATCC 700980 / DSM 13731 / RS-1) (Desulfovibrio magneticus) protein is Nicotinate-nucleotide--dimethylbenzimidazole phosphoribosyltransferase.